A 225-amino-acid polypeptide reads, in one-letter code: 3-dehydroquinate dehydratase (225 aa).

3-dehydroquinate is bound by residues Ser-6, 30 to 32 (EWR), and Arg-62. His-118 functions as the Proton donor/acceptor in the catalytic mechanism. Lys-143 (schiff-base intermediate with substrate) is an active-site residue. 3-dehydroquinate is bound by residues Arg-186, Ser-205, and Gln-209.

It belongs to the type-I 3-dehydroquinase family. In terms of assembly, homodimer.

It catalyses the reaction 3-dehydroquinate = 3-dehydroshikimate + H2O. It participates in metabolic intermediate biosynthesis; chorismate biosynthesis; chorismate from D-erythrose 4-phosphate and phosphoenolpyruvate: step 3/7. Functionally, involved in the third step of the chorismate pathway, which leads to the biosynthesis of aromatic amino acids. Catalyzes the cis-dehydration of 3-dehydroquinate (DHQ) and introduces the first double bond of the aromatic ring to yield 3-dehydroshikimate. The polypeptide is 3-dehydroquinate dehydratase (Streptococcus pneumoniae (strain Taiwan19F-14)).